Here is a 265-residue protein sequence, read N- to C-terminus: Speedy protein E12 (265 aa).

The tract at residues 1–80 is disordered; the sequence is MGQILGKIMM…EPEKELAPEP (80 aa). Positions 13-23 are enriched in low complexity; the sequence is QPQPQEEQSPQ. A compositionally biased stretch (acidic residues) spans 66-80; the sequence is DESDDEPEKELAPEP.

It belongs to the Speedy/Ringo family.

This chain is Speedy protein E12, found in Homo sapiens (Human).